The sequence spans 414 residues: Serine hydroxymethyltransferase (414 aa).

Residues Leu116 and Gly120–Leu122 contribute to the (6S)-5,6,7,8-tetrahydrofolate site. Lys224 bears the N6-(pyridoxal phosphate)lysine mark. (6S)-5,6,7,8-tetrahydrofolate-binding positions include Glu240 and Ser348–Phe350.

This sequence belongs to the SHMT family. In terms of assembly, homodimer. Pyridoxal 5'-phosphate is required as a cofactor.

The protein localises to the cytoplasm. It carries out the reaction (6R)-5,10-methylene-5,6,7,8-tetrahydrofolate + glycine + H2O = (6S)-5,6,7,8-tetrahydrofolate + L-serine. Its pathway is one-carbon metabolism; tetrahydrofolate interconversion. The protein operates within amino-acid biosynthesis; glycine biosynthesis; glycine from L-serine: step 1/1. Functionally, catalyzes the reversible interconversion of serine and glycine with tetrahydrofolate (THF) serving as the one-carbon carrier. This reaction serves as the major source of one-carbon groups required for the biosynthesis of purines, thymidylate, methionine, and other important biomolecules. Also exhibits THF-independent aldolase activity toward beta-hydroxyamino acids, producing glycine and aldehydes, via a retro-aldol mechanism. The protein is Serine hydroxymethyltransferase of Campylobacter jejuni subsp. jejuni serotype O:23/36 (strain 81-176).